A 222-amino-acid polypeptide reads, in one-letter code: Guanylate kinase (222 aa).

The region spanning 19 to 197 (GFLFILSSPS…SVSLIKSIYL (179 aa)) is the Guanylate kinase-like domain. ATP is bound at residue 26–33 (SPSGAGKS).

Belongs to the guanylate kinase family.

Its subcellular location is the cytoplasm. The catalysed reaction is GMP + ATP = GDP + ADP. In terms of biological role, essential for recycling GMP and indirectly, cGMP. The protein is Guanylate kinase of Bartonella henselae (strain ATCC 49882 / DSM 28221 / CCUG 30454 / Houston 1) (Rochalimaea henselae).